The sequence spans 75 residues: Protease B inhibitor 1 (75 aa).

T74 is subject to Phosphothreonine.

The protein belongs to the protease inhibitor I9 family. Part of the heterodimeric LMA1 complex together with the thioredoxin II/TRX2. LMA1 binds to the ATPase SEC18.

It localises to the cytoplasm. It is found in the nucleus. Cytosolic inhibitor of vacuolar proteinase B (yscB), probably regulating protease B activity during limited proteolysis. PBI2 is a component of the LMA1 complex, which is involved in the facilitation of vesicle fusion such as homotypic vacuole and ER-derived COPII vesicle fusion with the Golgi. This Saccharomyces cerevisiae (Baker's yeast) protein is Protease B inhibitor 1 (PBI2).